The sequence spans 315 residues: Methenyltetrahydromethanopterin cyclohydrolase (315 aa).

This sequence belongs to the MCH family.

Its subcellular location is the cytoplasm. It carries out the reaction 5,10-methenyl-5,6,7,8-tetrahydromethanopterin + H2O = N(5)-formyl-5,6,7,8-tetrahydromethanopterin + H(+). The protein operates within one-carbon metabolism; methanogenesis from CO(2); 5,10-methenyl-5,6,7,8-tetrahydromethanopterin from CO(2): step 3/3. Functionally, catalyzes the reversible interconversion of 5-formyl-H(4)MPT to methenyl-H(4)MPT(+). The chain is Methenyltetrahydromethanopterin cyclohydrolase from Methanosphaerula palustris (strain ATCC BAA-1556 / DSM 19958 / E1-9c).